A 76-amino-acid polypeptide reads, in one-letter code: Putative defensin-like protein 184 (76 aa).

Residues 1-21 (MKNSSILFVLIIVVFLISSSG) form the signal peptide. Disulfide bonds link C32–C76, C38–C58, C44–C70, and C48–C72.

The protein belongs to the DEFL family.

The protein localises to the secreted. This Arabidopsis thaliana (Mouse-ear cress) protein is Putative defensin-like protein 184 (LCR18).